We begin with the raw amino-acid sequence, 360 residues long: Secreted LysM effector LysM2 (360 aa).

A signal peptide spans 1-21 (MKISSLSILPLLGVVSAGIHG). The region spanning 37–85 (TWYLDLVDDSYTCENIESQWDLSHEAFVAWNPGVKKDCSGLKVGLSVCV) is the LysM 1 domain. A compositionally biased stretch (low complexity) spans 94–113 (ATPTSEASTSSETSSASPTA). The segment at 94–125 (ATPTSEASTSSETSSASPTASRPPLPSPTQDG) is disordered. N-linked (GlcNAc...) asparagine glycosylation occurs at Asn129. The 48-residue stretch at 132–179 (KFHQAVSGDTCSKIISRYKPITLDQFIEWNPALEKDCSGLWSGYYYCV) folds into the LysM 2 domain. The N-linked (GlcNAc...) asparagine glycan is linked to Asn204. LysM domains follow at residues 225-272 (RWHK…YYCI) and 311-357 (KWHQ…YVCV).

Belongs to the secreted LysM effector family.

The protein localises to the secreted. It localises to the cell wall. Functionally, secreted effector that binds two substrates, chitin and N-linked oligosaccharides associated with human skin glycoproteins. Could provide the pathogen with three important functions including shielding host cell wall chitin from the human immune system, shielding the pathogen's glycoproteins from host degradation and immune surveillance, and helping facilitate pathogen adhesion to human skin. The protein is Secreted LysM effector LysM2 of Trichophyton rubrum (strain ATCC MYA-4607 / CBS 118892) (Athlete's foot fungus).